Consider the following 448-residue polypeptide: Homogentisate 1,2-dioxygenase (448 aa).

The active-site Proton acceptor is His303. Residues His346 and Glu352 each coordinate Fe cation. The homogentisate site is built by Tyr361 and His382. Residue His382 coordinates Fe cation.

It belongs to the homogentisate dioxygenase family. As to quaternary structure, hexamer; dimer of trimers. The cofactor is Fe cation.

The catalysed reaction is homogentisate + O2 = 4-maleylacetoacetate + H(+). Its pathway is amino-acid degradation; L-phenylalanine degradation; acetoacetate and fumarate from L-phenylalanine: step 4/6. Involved in the catabolism of homogentisate (2,5-dihydroxyphenylacetate or 2,5-OH-PhAc), a central intermediate in the degradation of phenylalanine and tyrosine. Catalyzes the oxidative ring cleavage of the aromatic ring of homogentisate to yield maleylacetoacetate. The polypeptide is Homogentisate 1,2-dioxygenase (Rhodopseudomonas palustris (strain BisB18)).